The sequence spans 191 residues: Calcium and integrin-binding protein 1 (191 aa).

Residue Gly2 is the site of N-myristoyl glycine attachment. 2 EF-hand domains span residues 103 to 138 (TPDI…LTGE) and 148 to 183 (EMKQ…SPDF). Residues Asp116, Asp118, Asp120, Thr122, Asp127, Asp161, Asp163, Asp165, Thr167, and Glu172 each contribute to the Ca(2+) site.

Monomer. Interacts with the heterodimeric integrin alpha-IIb/beta3 (ITGA2B-ITGB3). Interacts with ITGA2B (via cytoplasmic domain); the interaction is direct and calcium-dependent. Interacts with the protein kinases PLK2/SNK and PRKDC (via the region immediately upstream of the kinase domain). Interacts with PLK3; the interaction inhibits PLK3 kinase activity. Interacts with PSEN2. Interacts (via C-terminus) with F8. Interacts with NBR1 (via C-terminus). Interacts with FEZ1 (via C-terminus). Interacts with UBR5 (via C-terminus); the interaction is sensitive to DNA damage, and may target CIB1 for ubiquitin-mediated degradation. Interacts with IFI6; the interaction is direct. Interacts with BCL2. Interacts with ITPR3; the interaction occurs in a calcium dependent manner. Interacts with PTK2/FAK1. Interacts with MAP3K5; the interaction inhibits MAP3K5 activation by phosphorylation, and its subsequent interaction with TRAF2. Interacts (via C-terminal region) with STMN2 (via the N-terminal region); the interaction is direct, occurs in a calcium-dependent manner and attenuates the STMN2-induced neurite outgrowth inhibition. Interacts with SPHK1, the interaction occurs in a calcium-dependent manner. Interacts with ITGA2B (via C-terminal cytoplasmic tail); the interaction occurs upon platelet aggregation and is stabilized/increased in a calcium and magnesium-dependent manner. Interacts with PAK1 (via N-terminal region); the interaction is direct and occurs in a calcium-dependent manner. Interacts with RAC3 (via C-terminal region); the interaction induces their association with the cytoskeleton upon alpha-IIb/beta3 integrin-mediated adhesion. Interacts with ITGA5 and ITGAV. Interacts with MYO1C. Interacts with ITGA2B (via C-terminal cytoplasmic tail region). Interacts (via C-terminal region) with PPP3R1; the interaction increases upon cardiomyocytes hypertrophy. Interacts with CACNA1C; the interaction increases upon cardiomyocytes hypertrophy. Interacts with TAS1R2 (via C-terminus); this interaction is independent of the myristoylation state of CIB1. Interacts and forms a complex with TMC6 and TMC8; the interaction stabilizes each component of the complex. In terms of tissue distribution, expressed in cardiomyocytes and neurons (at protein level). Expressed during early neural development.

It is found in the membrane. The protein resides in the cell membrane. The protein localises to the sarcolemma. It localises to the apical cell membrane. Its subcellular location is the cell projection. It is found in the ruffle membrane. The protein resides in the filopodium tip. The protein localises to the growth cone. It localises to the lamellipodium. Its subcellular location is the cytoplasm. It is found in the cytoskeleton. The protein resides in the microtubule organizing center. The protein localises to the centrosome. It localises to the perinuclear region. Its subcellular location is the nucleus. It is found in the neuron projection. The protein resides in the perikaryon. In terms of biological role, calcium-binding protein that plays a role in the regulation of numerous cellular processes, such as cell differentiation, cell division, cell proliferation, cell migration, thrombosis, angiogenesis, cardiac hypertrophy and apoptosis. Involved in bone marrow megakaryocyte differentiation by negatively regulating thrombopoietin-mediated signaling pathway. Participates in the endomitotic cell cycle of megakaryocyte, a form of mitosis in which both karyokinesis and cytokinesis are interrupted. Plays a role in integrin signaling by negatively regulating alpha-IIb/beta3 activation in thrombin-stimulated megakaryocytes preventing platelet aggregation. Up-regulates PTK2/FAK1 activity, and is also needed for the recruitment of PTK2/FAK1 to focal adhesions; it thus appears to play an important role in focal adhesion formation. Positively regulates cell migration on fibronectin in a CDC42-dependent manner, the effect being negatively regulated by PAK1. Functions as a negative regulator of stress activated MAP kinase (MAPK) signaling pathways. Down-regulates inositol 1,4,5-trisphosphate receptor-dependent calcium signaling. Involved in sphingosine kinase SPHK1 translocation to the plasma membrane in a N-myristoylation-dependent manner preventing TNF-alpha-induced apoptosis. Regulates serine/threonine-protein kinase PLK3 activity for proper completion of cell division progression. Plays a role in microtubule (MT) dynamics during neuronal development; disrupts the MT depolymerization activity of STMN2 attenuating NGF-induced neurite outgrowth and the MT reorganization at the edge of lamellipodia. Promotes cardiomyocyte hypertrophy via activation of the calcineurin/NFAT signaling pathway. Stimulates calcineurin PPP3R1 activity by mediating its anchoring to the sarcolemma. In ischemia-induced (pathological or adaptive) angiogenesis, stimulates endothelial cell proliferation, migration and microvessel formation by activating the PAK1 and ERK1/ERK2 signaling pathway. Also promotes cancer cell survival and proliferation. May regulate cell cycle and differentiation of spermatogenic germ cells, and/or differentiation of supporting Sertoli cells. Forms a complex with TMC6/EVER1 and TMC8/EVER2 in lymphocytes and keratynocytes where CIB1 stabilizes TMC6 and TMC8 levels and reciprocally. This chain is Calcium and integrin-binding protein 1 (Cib1), found in Rattus norvegicus (Rat).